The primary structure comprises 264 residues: Mediator of RNA polymerase II transcription subunit 4 (264 aa).

A disordered region spans residues 183–264 (LTKLPGQEDG…DLDLFNPDEF (82 aa)). Residues 200-225 (NEDKNIVKDAEGAEGEIRQDDKKEDD) are compositionally biased toward basic and acidic residues. Over residues 236 to 264 (AEGDEDKNAGEDEDEAMDSDLDLFNPDEF) the composition is skewed to acidic residues.

This sequence belongs to the Mediator complex subunit 4 family. As to quaternary structure, component of the Mediator complex.

It is found in the nucleus. Component of the Mediator complex, a coactivator involved in the regulated transcription of nearly all RNA polymerase II-dependent genes. Mediator functions as a bridge to convey information from gene-specific regulatory proteins to the basal RNA polymerase II transcription machinery. Mediator is recruited to promoters by direct interactions with regulatory proteins and serves as a scaffold for the assembly of a functional preinitiation complex with RNA polymerase II and the general transcription factors. This chain is Mediator of RNA polymerase II transcription subunit 4 (MED4), found in Candida glabrata (strain ATCC 2001 / BCRC 20586 / JCM 3761 / NBRC 0622 / NRRL Y-65 / CBS 138) (Yeast).